A 985-amino-acid chain; its full sequence is Guanine nucleotide exchange protein smcr8b (985 aa).

The 179-residue stretch at 47 to 225 (ISSAKLKKDF…VKCSSEREPI (179 aa)) folds into the uDENN FLCN/SMCR8-type domain. Positions 242 to 292 (NEKSSHTDEISPQEKDGCGNSRKVEVKLENENRSHFEHEQYGKQRKDKPDK) are enriched in basic and acidic residues. 3 disordered regions span residues 242–301 (NEKS…PLAN), 502–528 (QSQVQHSTLNTPSKDNRPQVADKSPAE), and 639–659 (EESPEQETDEKNSSQYQEDNN). In terms of domain architecture, cDENN FLCN/SMCR8-type spans 390 to 895 (RLKTLEELCD…LINLLVEPKS (506 aa)). Polar residues predominate over residues 502–514 (QSQVQHSTLNTPS). The dDENN FLCN/SMCR8-type domain maps to 904–962 (FTFAQSVQSKLVTKAFLLTFSHGHPSPSRPQGSSGTECFLSELHTDDKKILRYLSELIK).

This sequence belongs to the SMCR8 family. Component of the C9orf72-SMCR8 complex. The C9orf72-SMCR8 complex associates with the ATG1/ULK1 kinase complex.

The protein resides in the cytoplasm. It localises to the nucleus. In terms of biological role, component of the C9orf72-SMCR8 complex, a complex that has guanine nucleotide exchange factor (GEF) activity and regulates autophagy. In the complex, C9orf72 and SMCR8 probably constitute the catalytic subunits that promote the exchange of GDP to GTP, converting inactive GDP-bound RAB8A and RAB39B into their active GTP-bound form, thereby promoting autophagosome maturation. The C9orf72-SMCR8 complex also acts as a negative regulator of autophagy initiation by interacting with the ATG1/ULK1 kinase complex and inhibiting its protein kinase activity. This chain is Guanine nucleotide exchange protein smcr8b (smcr8b), found in Danio rerio (Zebrafish).